Reading from the N-terminus, the 216-residue chain is Thiosulfate dehydrogenase electron acceptor (216 aa).

Residues 1–22 (MKSIHWPLAGVAALLLSMQAQA) form the signal peptide. Cytochrome c domains follow at residues 23–108 (ADGQ…EAMP) and 118–210 (SEAA…ANVG). Heme c is bound by residues C41, C44, H45, C141, C144, and H145.

Post-translationally, binds 2 heme c groups covalently per subunit.

Acts as an electron acceptor for the thiosulfate dehydrogenase TsdA. In Stutzerimonas stutzeri (strain A1501) (Pseudomonas stutzeri), this protein is Thiosulfate dehydrogenase electron acceptor (tsdB).